Here is a 540-residue protein sequence, read N- to C-terminus: Exopolysaccharide phosphotransferase SCO6022 (540 aa).

Belongs to the stealth family.

In Streptomyces coelicolor (strain ATCC BAA-471 / A3(2) / M145), this protein is Exopolysaccharide phosphotransferase SCO6022.